A 958-amino-acid polypeptide reads, in one-letter code: MNIKLRFPRSSLAIAILSVVAFLVLIALTAFFLVHFYSEYLWYDQLGFTGVIVTQWAAIFVVFCLAFVFVSIFLWLCMFSAHKFRPRYTSLSSVLSHYQKVIDPIRKIVVLLVSLGLGAVAGIFAASRWDIVLAWLNKVPTGKSDPIFHNDISFYFFDLPFYRRLLFFLLVTFVLGGILSILISVVYGALRVDGKEIWLSKGARVQYAVLAAGIFVLLGLEFWLNRFDTLLSDRSGLITGAAYVEVNALIPGFAVLALVALGVALLFCITAFTSRWRLPIIGVALAVVSALVVITALPWGVQRFHVDPNARVLESEYIKRNIESTRFAYGIDKTHEVLYSAKTDVKPGQLRNDARTTASIRILDPGLVSRAFGQLQQFRQYYTFGDDLSVDRYHLGGETRDAVVALRELSLSGLGSGNTWVNQALVYTHGYGLVAAYGNDRTPDGEPKFFESGIPTTGLLGKYEPRIYFGRKSPPYSIVGAPSGAAPFEFDYPSSSGGESYTTFKGSGGPKLDSFLKRLIYAMKFGSEQILLSSQVGDYSQILYDRDPIKRVGKVAPWLRLDRNPYPSVVDGRIVWIVDGYTTSDQFPYSDLNSFTTLSQDSQSLPALVNGSDSINYIRNSVKATVDAYSGQVKLYAWDPNDPILKVWEKVFPGTLHPIKEISGDLMSHVRYPLELFNIQRQILARYHVTDPGVFFSHEDAWGIPIDPQKSEPVMQSTGQRRSRTVFSVAQPPYYLTMRMPGQNLAAYSIYSVFIPKSTGENSRSVLTGYLSANSDAGNIPGQISPDYGKLTLLRLSKDQTVPGPGQIQNAFDSDPKVGNQLNILRQGGQTRVLPGNLLTLPVGGGFLYVQPVYVQSTGSTSYTLLQKVLAAFGNKIAFESTLNQALDSLFAGNSGASNSGTSDISIHPPPHSDLIAQIKAALREKVDALTNKDLVKYAQADSKLNELLSRYLDANRG.

7 helical membrane-spanning segments follow: residues Ile-14 to Val-34, Ile-59 to Phe-79, Lys-107 to Ser-127, Leu-166 to Val-186, Val-205 to Asn-225, Leu-249 to Ile-269, and Ile-280 to Gly-300.

Belongs to the UPF0182 family.

The protein resides in the cell membrane. This is UPF0182 protein TW644 from Tropheryma whipplei (strain TW08/27) (Whipple's bacillus).